The sequence spans 833 residues: DNA ligase (833 aa).

NAD(+) contacts are provided by residues 35 to 39, 84 to 85, and Glu-115; these read DADYD and SL. Lys-117 serves as the catalytic N6-AMP-lysine intermediate. The NAD(+) site is built by Arg-138, Glu-175, Lys-292, and Lys-316. Zn(2+) is bound by residues Cys-410, Cys-413, Cys-428, and Cys-434. The region spanning 750–833 is the BRCT domain; that stretch reads EKTGPLDGQT…AFLGDHGQQP (84 aa).

This sequence belongs to the NAD-dependent DNA ligase family. LigA subfamily. Mg(2+) is required as a cofactor. Requires Mn(2+) as cofactor.

The catalysed reaction is NAD(+) + (deoxyribonucleotide)n-3'-hydroxyl + 5'-phospho-(deoxyribonucleotide)m = (deoxyribonucleotide)n+m + AMP + beta-nicotinamide D-nucleotide.. In terms of biological role, DNA ligase that catalyzes the formation of phosphodiester linkages between 5'-phosphoryl and 3'-hydroxyl groups in double-stranded DNA using NAD as a coenzyme and as the energy source for the reaction. It is essential for DNA replication and repair of damaged DNA. The protein is DNA ligase of Xanthomonas axonopodis pv. citri (strain 306).